The chain runs to 342 residues: Cyclin pch1 (342 aa).

Residues 261–342 (LPIDQKNGSH…TDKEMETEAS (82 aa)) form a disordered region. Polar residues predominate over residues 278 to 314 (TPSSLASVSTQATPQHQNSSGRTDSFHSLNTETPSKS). Residue threonine 300 is modified to Phosphothreonine. At serine 302 the chain carries Phosphoserine. Basic and acidic residues predominate over residues 329 to 342 (KSSDTDKEMETEAS).

The protein belongs to the cyclin family. Cyclin C subfamily. Interacts with cdc2 protein kinase and with the N-terminal domain of cdk9.

Its subcellular location is the nucleus. In terms of biological role, essential for progression through the whole cell cycle. The polypeptide is Cyclin pch1 (pch1) (Schizosaccharomyces pombe (strain 972 / ATCC 24843) (Fission yeast)).